The sequence spans 96 residues: MTLRPLHDKVILKREEVETRSAGGIVLTGSAATKSTRGKVIAVGTGRLFENGSVQALAVKVGDVVIFNEGYGVKSEKIDGEEVLILSENDILAIVE.

The protein belongs to the GroES chaperonin family. Heptamer of 7 subunits arranged in a ring. Interacts with the chaperonin GroEL.

The protein localises to the cytoplasm. Functionally, together with the chaperonin GroEL, plays an essential role in assisting protein folding. The GroEL-GroES system forms a nano-cage that allows encapsulation of the non-native substrate proteins and provides a physical environment optimized to promote and accelerate protein folding. GroES binds to the apical surface of the GroEL ring, thereby capping the opening of the GroEL channel. The protein is Co-chaperonin GroES of Actinobacillus pleuropneumoniae serotype 5b (strain L20).